Consider the following 1021-residue polypeptide: Sodium/potassium-transporting ATPase subunit alpha-1 (1021 aa).

Positions 1–5 (MGKGV) are excised as a propeptide. Basic and acidic residues predominate over residues 1 to 11 (MGKGVGRDKYE). A disordered region spans residues 1 to 37 (MGKGVGRDKYEPAAVSEHGDKKKAKKERDMDELKKEV). At 6 to 85 (GRDKYEPAAV…NALTPPPTTP (80 aa)) the chain is on the cytoplasmic side. The residue at position 9 (Lys9) is an N6-acetyllysine. Position 10 is a phosphotyrosine (Tyr10). Position 16 is a phosphoserine; by PKC (Ser16). Lys21 is subject to N6-acetyllysine. Residues 26–37 (KERDMDELKKEV) show a composition bias toward basic and acidic residues. Ser38 and Ser45 each carry phosphoserine. Positions 80 to 82 (PPP) are phosphoinositide-3 kinase binding. The helical transmembrane segment at 86–106 (EWVKFCRQLFGGFSMLLWIGA) threads the bilayer. Residues 107–129 (ILCFLAYGIQAATEEEPQNDNLY) lie on the Extracellular side of the membrane. Residues 130 to 150 (LGVVLSAVVIITGCFSYYQEA) traverse the membrane as a helical segment. The Cytoplasmic segment spans residues 151–286 (KSSKIMESFK…GGQTPIAAEI (136 aa)). The disordered stretch occupies residues 214–233 (SSLTGESEPQTRSPDFTNEN). At Ser226 the chain carries Phosphoserine. Tyr258 bears the Phosphotyrosine mark. A helical membrane pass occupies residues 287 to 306 (EHFIHIITGVAVFLGVSFFI). At 307-318 (LSLILEYTWLEA) the chain is on the extracellular side. The chain crosses the membrane as a helical span at residues 319-336 (VIFLIGIIVANVPEGLLA). Residues 337–770 (TVTVCLTLTA…EEGRLIFDNL (434 aa)) are Cytoplasmic-facing. Residue Asp374 is the 4-aspartylphosphate intermediate of the active site. Ser450 and Ser482 each carry phosphoserine. Position 485 (Lys485) interacts with ATP. Tyr540 is subject to Phosphotyrosine. Residues 594-715 (RAAVPDAVGK…QGAIVAVTGD (122 aa)) are mediates interaction with SCN7A. Lys659 carries the N6-succinyllysine modification. Phosphoserine is present on residues Ser666 and Ser673. Positions 715 and 719 each coordinate Mg(2+). Residues 771 to 790 (KKSIAYTLTSNIPEITPFLI) traverse the membrane as a helical segment. The Extracellular segment spans residues 791–800 (FIIANIPLPL). Residues 801 to 821 (GTVTILCIDLGTDMVPAISLA) form a helical membrane-spanning segment. At 822–841 (YEQAESDIMKRQPRNPKTDK) the chain is on the cytoplasmic side. A helical membrane pass occupies residues 842–864 (LVNEQLISMAYGQIGMIQALGGF). Residues 865–916 (FTYFVILAENGFLPIHLLGLRVNWDDRWINDVEDSYGQQWTYEQRKIVEFTC) are Extracellular-facing. The helical transmembrane segment at 917 to 936 (HTPFFVTIVVVQWADLVICK) threads the bilayer. The Cytoplasmic segment spans residues 937 to 949 (TRRNSVFQQGMKN). A Phosphoserine; by PKA modification is found at Ser941. The chain crosses the membrane as a helical span at residues 950–968 (KILIFGLFEETALAAFLSY). The Extracellular segment spans residues 969-983 (CPGMGVALRMYPLKP). A helical membrane pass occupies residues 984-1004 (TWWFCAFPYSLLIFVYDEVRK). The Cytoplasmic segment spans residues 1005–1021 (LIIRRRPGGWVEKETYY).

The protein belongs to the cation transport ATPase (P-type) (TC 3.A.3) family. Type IIC subfamily. The sodium/potassium-transporting ATPase is composed of a catalytic alpha subunit, an auxiliary non-catalytic beta subunit and an additional regulatory subunit. Interacts with regulatory subunit FXYD1. Interacts with regulatory subunit FXYD3. Interacts with SIK1. Interacts with SLC35G1 and STIM1. Interacts with CLN3; this interaction regulates the sodium/potassium-transporting ATPase complex localization at the plasma membrane. Interacts with SCN7A; activates ATP1A1 P-type sodium:potassium-exchanging transporter activity which indirectly signals to nearby neurons to regulate sodium homeostasis. Post-translationally, phosphorylation on Tyr-10 modulates pumping activity. Phosphorylation of Ser-941 by PKA modulates the response of ATP1A1 to PKC. Dephosphorylation by protein phosphatase 2A (PP2A) following increases in intracellular sodium, leading to increase catalytic activity.

It localises to the cell membrane. The protein localises to the basolateral cell membrane. Its subcellular location is the sarcolemma. It is found in the cell projection. The protein resides in the axon. It localises to the melanosome. It catalyses the reaction K(+)(out) + Na(+)(in) + ATP + H2O = K(+)(in) + Na(+)(out) + ADP + phosphate + H(+). Its function is as follows. This is the catalytic component of the active enzyme, which catalyzes the hydrolysis of ATP coupled with the exchange of sodium and potassium ions across the plasma membrane. This action creates the electrochemical gradient of sodium and potassium ions, providing the energy for active transport of various nutrients. Could also be part of an osmosensory signaling pathway that senses body-fluid sodium levels and controls salt intake behavior as well as voluntary water intake to regulate sodium homeostasis. This chain is Sodium/potassium-transporting ATPase subunit alpha-1 (ATP1A1), found in Sus scrofa (Pig).